A 371-amino-acid polypeptide reads, in one-letter code: DNA replication and repair protein RecF (371 aa).

Residue 30–37 (GENAQGKT) coordinates ATP.

The protein belongs to the RecF family.

Its subcellular location is the cytoplasm. Its function is as follows. The RecF protein is involved in DNA metabolism; it is required for DNA replication and normal SOS inducibility. RecF binds preferentially to single-stranded, linear DNA. It also seems to bind ATP. The chain is DNA replication and repair protein RecF from Lysinibacillus sphaericus (strain C3-41).